A 177-amino-acid polypeptide reads, in one-letter code: FMRFamide-related peptides (177 aa).

Positions 1–21 are cleaved as a signal peptide; the sequence is MNHPRSIAMLAALWLVVSVTS. Residues 22–32 constitute a propeptide that is removed on maturation; the sequence is TPVRRSPDLEA. F45 bears the Phenylalanine amide mark. The propeptide occupies 47–93; that stretch reads RSTLPVVPPAQPSFLQRYSAPQPAALTADDLMTFLRAYEEDYSSPVS. Residues F102 and F111 each carry the phenylalanine amide modification. Residues 113-131 constitute a propeptide that is removed on maturation; it reads RSVDEENSGYQAETNTYPQ. Position 143 is a leucine amide (L143). A propeptide spanning residues 145–177 is cleaved from the precursor; the sequence is RDNELSESNDEDRYEVESERTKRSVVDPCNDCA. A disordered region spans residues 145–177; sequence RDNELSESNDEDRYEVESERTKRSVVDPCNDCA. Residues 149 to 158 are compositionally biased toward acidic residues; that stretch reads LSESNDEDRY. A compositionally biased stretch (basic and acidic residues) spans 159–169; that stretch reads EVESERTKRSV.

The protein belongs to the FARP (FMRFamide related peptide) family. In terms of tissue distribution, only expressed in the CNS and predominantly in the thoracic ganglia. Strongest expression is seen in two pairs of large neurons in each thoracic ganglion. These neurons are ventrolateral neurosecretory cells 1 and 2, they project their axons through transverse nerves into the periphery where axons from the prothoracic ganglion innervate the prothoracic gland.

It is found in the secreted. Regulates ecdysteroidogenesis by direct innervation of the prothoracic gland by reducing cAMP production via the receptor for myosuppressin. The neurons that innervate the prothoracic gland during the fifth instar are most active during days 0-4, after which they reduce and then peak again on day 6. Expression suppresses the biosynthesis of steroid hormones called ecdysteroids that elicit molting and metamorphosis. The sequence is that of FMRFamide-related peptides from Bombyx mori (Silk moth).